The primary structure comprises 837 residues: Ribosome biogenesis ATPase RIX7 (837 aa).

Disordered stretches follow at residues 36–56 (RSLR…EEDE) and 149–207 (ITST…LKSL). S42 is subject to Phosphoserine. Positions 43-56 (QGEEGENNEGEEDE) are enriched in acidic residues. Residues 149-163 (ITSTWSKSGSVSESI) show a composition bias toward polar residues. The segment covering 176–192 (KSKKRSKEGTCKVKRQK) has biased composition (basic residues). 246 to 253 (GPPGCGKT) is an ATP binding site. The tract at residues 443–468 (PTTATDSSEDNMEIDETANGDESSLK) is disordered. Over residues 449 to 461 (SSEDNMEIDETAN) the composition is skewed to acidic residues. 574–581 (GPPGCGKT) contacts ATP.

It belongs to the AAA ATPase family.

The protein localises to the nucleus. The protein resides in the nucleolus. Involved in ribosome biogenesis. Seems to be required for restructuring nucleoplasmic 60S pre-ribosomal particles to make them competent for nuclear export. The polypeptide is Ribosome biogenesis ATPase RIX7 (RIX7) (Saccharomyces cerevisiae (strain ATCC 204508 / S288c) (Baker's yeast)).